Reading from the N-terminus, the 206-residue chain is Phosphoribosyl-dephospho-CoA transferase (206 aa).

Active-site residues include aspartate 131 and aspartate 133.

This sequence belongs to the MdcG family.

The catalysed reaction is apo-[malonate decarboxylase ACP] + 2'-(5''-triphospho-alpha-D-ribosyl)-3'-dephospho-CoA = holo-[malonate decarboxylase ACP] + diphosphate. Functionally, transfers 2'-(5-triphosphoribosyl)-3'-dephosphocoenzyme-A to the apo-[acyl-carrier-protein] of the malonate decarboxylase to yield holo-[acyl-carrier-protein]. The chain is Phosphoribosyl-dephospho-CoA transferase from Pseudomonas fluorescens (strain Pf0-1).